A 132-amino-acid polypeptide reads, in one-letter code: Large ribosomal subunit protein uL24 (132 aa).

Belongs to the universal ribosomal protein uL24 family. Part of the 50S ribosomal subunit.

Functionally, one of two assembly initiator proteins, it binds directly to the 5'-end of the 23S rRNA, where it nucleates assembly of the 50S subunit. Its function is as follows. One of the proteins that surrounds the polypeptide exit tunnel on the outside of the subunit. The polypeptide is Large ribosomal subunit protein uL24 (Synechococcus sp. (strain JA-2-3B'a(2-13)) (Cyanobacteria bacterium Yellowstone B-Prime)).